Here is a 102-residue protein sequence, read N- to C-terminus: Large ribosomal subunit protein uL24 (102 aa).

The protein belongs to the universal ribosomal protein uL24 family. As to quaternary structure, part of the 50S ribosomal subunit.

Its function is as follows. One of two assembly initiator proteins, it binds directly to the 5'-end of the 23S rRNA, where it nucleates assembly of the 50S subunit. In terms of biological role, one of the proteins that surrounds the polypeptide exit tunnel on the outside of the subunit. The chain is Large ribosomal subunit protein uL24 from Alkaliphilus oremlandii (strain OhILAs) (Clostridium oremlandii (strain OhILAs)).